A 298-amino-acid polypeptide reads, in one-letter code: MNWITNYVRPRINSMLGRRPEVPENLWIKCPETGEMVFHKDLEDNKWVIPASGYHMKMPAKARLADLFDGGIYEALAQPKVAQDPLKFRDSKKYTDRLRDSRAKTEQEDTILAGVGLLKGLKIVAVVHEFQFMAGSLGIAAGEAIVKAFERAISERCPLVMFPASGGARMQEGILSLMQLPRTTVAVNMLKEAGMPYIVVLTNPTTGGVTASYAMLGDVHIAEPGAEICFAGKRVIEQTIREKLPEGFQTSEYLLEHGMVDMVIDRREIPDTLASMLKIMTKAPADNANAVVPLAASA.

Residues 26–295 enclose the CoA carboxyltransferase N-terminal domain; that stretch reads LWIKCPETGE…DNANAVVPLA (270 aa).

This sequence belongs to the AccD/PCCB family. In terms of assembly, acetyl-CoA carboxylase is a heterohexamer composed of biotin carboxyl carrier protein (AccB), biotin carboxylase (AccC) and two subunits each of ACCase subunit alpha (AccA) and ACCase subunit beta (AccD).

It localises to the cytoplasm. It catalyses the reaction N(6)-carboxybiotinyl-L-lysyl-[protein] + acetyl-CoA = N(6)-biotinyl-L-lysyl-[protein] + malonyl-CoA. The protein operates within lipid metabolism; malonyl-CoA biosynthesis; malonyl-CoA from acetyl-CoA: step 1/1. Functionally, component of the acetyl coenzyme A carboxylase (ACC) complex. Biotin carboxylase (BC) catalyzes the carboxylation of biotin on its carrier protein (BCCP) and then the CO(2) group is transferred by the transcarboxylase to acetyl-CoA to form malonyl-CoA. This Agrobacterium fabrum (strain C58 / ATCC 33970) (Agrobacterium tumefaciens (strain C58)) protein is Acetyl-coenzyme A carboxylase carboxyl transferase subunit beta.